Consider the following 166-residue polypeptide: NADH-quinone oxidoreductase subunit B (166 aa).

C44, C45, C110, and C140 together coordinate [4Fe-4S] cluster.

Belongs to the complex I 20 kDa subunit family. NDH-1 is composed of 14 different subunits. Subunits NuoB, C, D, E, F, and G constitute the peripheral sector of the complex. It depends on [4Fe-4S] cluster as a cofactor.

It is found in the cell membrane. It catalyses the reaction a quinone + NADH + 5 H(+)(in) = a quinol + NAD(+) + 4 H(+)(out). NDH-1 shuttles electrons from NADH, via FMN and iron-sulfur (Fe-S) centers, to quinones in the respiratory chain. The immediate electron acceptor for the enzyme in this species is believed to be a menaquinone. Couples the redox reaction to proton translocation (for every two electrons transferred, four hydrogen ions are translocated across the cytoplasmic membrane), and thus conserves the redox energy in a proton gradient. This is NADH-quinone oxidoreductase subunit B from Carboxydothermus hydrogenoformans (strain ATCC BAA-161 / DSM 6008 / Z-2901).